Consider the following 490-residue polypeptide: Glutamyl-tRNA(Gln) amidotransferase subunit A (490 aa).

Active-site charge relay system residues include Lys-81 and Ser-156. Residue Ser-180 is the Acyl-ester intermediate of the active site.

This sequence belongs to the amidase family. GatA subfamily. Heterotrimer of A, B and C subunits.

It carries out the reaction L-glutamyl-tRNA(Gln) + L-glutamine + ATP + H2O = L-glutaminyl-tRNA(Gln) + L-glutamate + ADP + phosphate + H(+). Allows the formation of correctly charged Gln-tRNA(Gln) through the transamidation of misacylated Glu-tRNA(Gln) in organisms which lack glutaminyl-tRNA synthetase. The reaction takes place in the presence of glutamine and ATP through an activated gamma-phospho-Glu-tRNA(Gln). The polypeptide is Glutamyl-tRNA(Gln) amidotransferase subunit A (Nocardia farcinica (strain IFM 10152)).